A 720-amino-acid polypeptide reads, in one-letter code: Polyribonucleotide nucleotidyltransferase (720 aa).

Aspartate 486 and aspartate 492 together coordinate Mg(2+). The KH domain occupies 553–612 (PRITVINVPKEKIREVIGTGGKVIREIVEFSGAKIDIEDDGTIKIASTSEESTQKAIDRI). Residues 622-690 (GKIYNGKVVK…DRGKVKLSMR (69 aa)) form the S1 motif domain. Positions 698–720 (EDISDKVGPKGGRGGRGEGDLAE) are disordered.

It belongs to the polyribonucleotide nucleotidyltransferase family. Mg(2+) serves as cofactor.

It localises to the cytoplasm. The enzyme catalyses RNA(n+1) + phosphate = RNA(n) + a ribonucleoside 5'-diphosphate. Involved in mRNA degradation. Catalyzes the phosphorolysis of single-stranded polyribonucleotides processively in the 3'- to 5'-direction. This Granulibacter bethesdensis (strain ATCC BAA-1260 / CGDNIH1) protein is Polyribonucleotide nucleotidyltransferase.